A 119-amino-acid polypeptide reads, in one-letter code: Immunoglobulin heavy variable 2-70D (119 aa).

The N-terminal stretch at 1–19 (MDILCSTLLLLTVPSWVLS) is a signal peptide. Q20 is modified (pyrrolidone carboxylic acid). Residues 20–44 (QVTLKESGPALVKPTQTLTLTCTFS) form a framework-1 region. The region spanning 20–119 (QVTLKESGPA…DTATYYCARI (100 aa)) is the Ig-like domain. C41 and C116 are disulfide-bonded. Positions 45–54 (GFSLSTSGMR) are complementarity-determining-1. Positions 55-71 (VSWIRQPPGKALEWLAR) are framework-2. The complementarity-determining-2 stretch occupies residues 72–78 (IDWDDDK). The interval 79 to 116 (FYSTSLKTRLTISKDTSKNQVVLTMTNMDPVDTATYYC) is framework-3. The tract at residues 117–119 (ARI) is complementarity-determining-3.

As to quaternary structure, immunoglobulins are composed of two identical heavy chains and two identical light chains; disulfide-linked.

Its subcellular location is the secreted. The protein localises to the cell membrane. Its function is as follows. V region of the variable domain of immunoglobulin heavy chains that participates in the antigen recognition. Immunoglobulins, also known as antibodies, are membrane-bound or secreted glycoproteins produced by B lymphocytes. In the recognition phase of humoral immunity, the membrane-bound immunoglobulins serve as receptors which, upon binding of a specific antigen, trigger the clonal expansion and differentiation of B lymphocytes into immunoglobulins-secreting plasma cells. Secreted immunoglobulins mediate the effector phase of humoral immunity, which results in the elimination of bound antigens. The antigen binding site is formed by the variable domain of one heavy chain, together with that of its associated light chain. Thus, each immunoglobulin has two antigen binding sites with remarkable affinity for a particular antigen. The variable domains are assembled by a process called V-(D)-J rearrangement and can then be subjected to somatic hypermutations which, after exposure to antigen and selection, allow affinity maturation for a particular antigen. This chain is Immunoglobulin heavy variable 2-70D, found in Homo sapiens (Human).